The chain runs to 269 residues: Regulating synaptic membrane exocytosis protein 4 (269 aa).

The C2 domain maps to 115 to 233 (PMGDVEIGLQ…DLTTLAVGWY (119 aa)). Phosphoserine is present on residues Ser254 and Ser257.

Binds PPFIA3. Does not bind RAB3.

It is found in the synapse. Functionally, regulates synaptic membrane exocytosis. This is Regulating synaptic membrane exocytosis protein 4 (RIMS4) from Homo sapiens (Human).